A 503-amino-acid chain; its full sequence is UDP-N-acetylglucosamine--peptide N-acetylglucosaminyltransferase GtfA subunit (503 aa).

Residues 1 to 78 are N-terminus R-fold-1; the sequence is MTIYNINLGI…FTDIKIAPTS (78 aa). Position 16 to 19 (16 to 19) interacts with UDP; sequence GVEY. The tract at residues 79-195 is extended beta-sheet domain; sequence VTVDDVLAYF…VYHFKDKIFY (117 aa). The interval 196–306 is C-terminus R-fold-1; sequence GKQAFVRAFM…QPKIVTIPVG (111 aa). His-242 contributes to the N-acetyl-D-glucosamine binding site. Positions 307-503 are R-fold-2; that stretch reads SIDSLTDSSQ…KKTVEEVLHD (197 aa). Position 328 (Arg-328) interacts with UDP. An N-acetyl-D-glucosamine-binding site is contributed by Glu-332. UDP-binding positions include Lys-333, Gly-358, and 384–385; that span reads HA. 404–407 serves as a coordination point for N-acetyl-D-glucosamine; the sequence is EGFG. 408 to 412 is a binding site for UDP; that stretch reads LTLME.

It belongs to the glycosyltransferase group 1 family. Glycosyltransferase 4 subfamily. As to quaternary structure, monomer. Interacts with stabilizing protein GtfB, probably as a heterotetramer with 2 subunits each of GtfA and GtfB, part of the accessory SecA2/SecY2 protein translocation apparatus.

It localises to the cytoplasm. It is found in the cell membrane. The catalysed reaction is L-seryl-[protein] + UDP-N-acetyl-alpha-D-glucosamine = 3-O-[N-acetyl-alpha-D-glucosaminyl]-L-seryl-[protein] + UDP + H(+). The protein operates within protein modification; protein glycosylation. Required for the polymorphic O-glycosylation of serine-rich repeat protein PsrP. Catalyzes the first step in glycosylation by transferring N-acetylglucosamine from UDP-GlcNAc to serine residues in PsrP. Part of the accessory SecA2/SecY2 system specifically required to export serine-rich repeat cell wall proteins encoded upstream in the same operon. The GtfA-GtfB complex adds GlcNAc from UDP-GlcNAc to PsrP (experimentally characterized with truncated PsrP-SSR1 constructs); this subunit alone has weak N-acetylglucosaminyl transferase activity that is 10-fold stimulated by GtfB. The complex requires at least a 25 residue-long peptide for activity; the in vitro assay has only been seen to glycosylate Ser residues. The alpha linkage was shown in L.reuteri. This is UDP-N-acetylglucosamine--peptide N-acetylglucosaminyltransferase GtfA subunit from Streptococcus pneumoniae serotype 4 (strain ATCC BAA-334 / TIGR4).